A 475-amino-acid polypeptide reads, in one-letter code: Ribulose bisphosphate carboxylase large chain (475 aa).

The propeptide occupies 1–2; it reads MS. Pro3 is subject to N-acetylproline. Residue Lys14 is modified to N6,N6,N6-trimethyllysine. Residues Asn123 and Thr173 each contribute to the substrate site. Lys175 (proton acceptor) is an active-site residue. Lys177 serves as a coordination point for substrate. Residues Lys201, Asp203, and Glu204 each coordinate Mg(2+). An N6-carboxylysine modification is found at Lys201. His294 (proton acceptor) is an active-site residue. 3 residues coordinate substrate: Arg295, His327, and Ser379.

It belongs to the RuBisCO large chain family. Type I subfamily. As to quaternary structure, heterohexadecamer of 8 large chains and 8 small chains. Mg(2+) serves as cofactor.

It is found in the plastid. The protein resides in the chloroplast. It carries out the reaction 2 (2R)-3-phosphoglycerate + 2 H(+) = D-ribulose 1,5-bisphosphate + CO2 + H2O. The catalysed reaction is D-ribulose 1,5-bisphosphate + O2 = 2-phosphoglycolate + (2R)-3-phosphoglycerate + 2 H(+). Its function is as follows. RuBisCO catalyzes two reactions: the carboxylation of D-ribulose 1,5-bisphosphate, the primary event in carbon dioxide fixation, as well as the oxidative fragmentation of the pentose substrate in the photorespiration process. Both reactions occur simultaneously and in competition at the same active site. In Chlorella vulgaris (Green alga), this protein is Ribulose bisphosphate carboxylase large chain.